The sequence spans 135 residues: uncharacterized protein (135 aa).

The segment at 1–75 (MAAATETGQA…PPPRPPQRRC (75 aa)) is disordered.

This is an uncharacterized protein from Homo sapiens (Human).